A 124-amino-acid polypeptide reads, in one-letter code: Small ribosomal subunit protein bS6 (124 aa).

The protein belongs to the bacterial ribosomal protein bS6 family.

In terms of biological role, binds together with bS18 to 16S ribosomal RNA. The chain is Small ribosomal subunit protein bS6 from Actinobacillus pleuropneumoniae serotype 7 (strain AP76).